The following is a 664-amino-acid chain: Fructose-1,6-bisphosphatase class 3 (664 aa).

It belongs to the FBPase class 3 family. Requires Mn(2+) as cofactor.

It catalyses the reaction beta-D-fructose 1,6-bisphosphate + H2O = beta-D-fructose 6-phosphate + phosphate. It functions in the pathway carbohydrate biosynthesis; gluconeogenesis. The sequence is that of Fructose-1,6-bisphosphatase class 3 from Bacteroides thetaiotaomicron (strain ATCC 29148 / DSM 2079 / JCM 5827 / CCUG 10774 / NCTC 10582 / VPI-5482 / E50).